Here is a 143-residue protein sequence, read N- to C-terminus: Large ribosomal subunit protein uL11 (143 aa).

The protein belongs to the universal ribosomal protein uL11 family. In terms of assembly, part of the ribosomal stalk of the 50S ribosomal subunit. Interacts with L10 and the large rRNA to form the base of the stalk. L10 forms an elongated spine to which L12 dimers bind in a sequential fashion forming a multimeric L10(L12)X complex. In terms of processing, one or more lysine residues are methylated.

Forms part of the ribosomal stalk which helps the ribosome interact with GTP-bound translation factors. In Clavibacter michiganensis subsp. michiganensis (strain NCPPB 382), this protein is Large ribosomal subunit protein uL11.